A 567-amino-acid polypeptide reads, in one-letter code: Hexose transporter HXT11 (567 aa).

Over residues 1-22 (MSGVNNTSANELSTTMSNSNSA) the composition is skewed to polar residues. A disordered region spans residues 1–45 (MSGVNNTSANELSTTMSNSNSAVGAPSVKTEHGDSKNSLNLDANE). Residues 1 to 56 (MSGVNNTSANELSTTMSNSNSAVGAPSVKTEHGDSKNSLNLDANEPPIDLPQKPLS) lie on the Cytoplasmic side of the membrane. Residues 57-77 (AYTTVAILCLMIAFGGFIFGW) traverse the membrane as a helical segment. Residues 78-112 (DTGTISGFVNLSDFIRRFGQKNDKGTYYLSKVRMG) are Extracellular-facing. N87 carries N-linked (GlcNAc...) asparagine glycosylation. A helical transmembrane segment spans residues 113–133 (LIVSIFNIGCAIGGIVLSKVG). Residues 134–139 (DIYGRR) are Cytoplasmic-facing. The helical transmembrane segment at 140–160 (IGLITVTAIYVVGILIQITSI) threads the bilayer. The Extracellular portion of the chain corresponds to 161-170 (NKWYQYFIGR). The helical transmembrane segment at 171 to 191 (IISGLGVGGIAVLSPMLISEV) threads the bilayer. Topologically, residues 192–197 (APKHIR) are cytoplasmic. The chain crosses the membrane as a helical span at residues 198-218 (GTLVQLYQLMGTMGIFLGYCT). Over 219–232 (NYGTKNYHNATQWR) the chain is Extracellular. N-linked (GlcNAc...) asparagine glycosylation occurs at N227. Residues 233 to 253 (VGLGLCFAWATFMVSGMMFVP) traverse the membrane as a helical segment. The Cytoplasmic segment spans residues 254 to 336 (ESPRYLIEVG…IQSLQQLTGD (83 aa)). Residues 337-353 (NYFFYYGTTIFKSVGLK) traverse the membrane as a helical segment. The Extracellular segment spans residues 354–359 (DSFQTS). Residues 360 to 377 (IIIGVVNFFSSFIAVYTI) traverse the membrane as a helical segment. The Cytoplasmic segment spans residues 378 to 384 (ERFGRRT). Residues 385-405 (CLLWGAASMLCCFAVFASVGV) form a helical membrane-spanning segment. The Extracellular segment spans residues 406 to 429 (TKLWPQGSSHQDITSQGAGNCMIV). Residues 430–450 (FTMFFIFSFATTWAGGCYVIV) form a helical membrane-spanning segment. Topologically, residues 451-467 (SETFPLRVKSRGMAIAT) are cytoplasmic. Residues 468-488 (AANWMWGFLISFFTPFITGAI) form a helical membrane-spanning segment. A topological domain (extracellular) is located at residue N489. A helical membrane pass occupies residues 490–510 (FYYGYVFLGCLVFAYFYVFFF). The Cytoplasmic portion of the chain corresponds to 511–567 (VPETKGLTLEEVNTMWLEGVPAWKSASWVPPERRTADYDADAIDHDNRPIYKRFFSS).

The protein belongs to the major facilitator superfamily. Sugar transporter (TC 2.A.1.1) family.

It is found in the membrane. In terms of biological role, probable glucose transporter. This chain is Hexose transporter HXT11 (HXT11), found in Saccharomyces cerevisiae (strain ATCC 204508 / S288c) (Baker's yeast).